The chain runs to 244 residues: Lytic polysaccharide monooxygenase-like protein ANIA_04702 (244 aa).

The first 23 residues, 1–23 (MLMSTSPSPWLAAAMLCIGLANA), serve as a signal peptide directing secretion. His24 is a binding site for Cu(2+). Methylhistidine is present on His24. 6 N-linked (GlcNAc...) asparagine glycosylation sites follow: Asn57, Asn80, Asn118, Asn159, Asn192, and Asn198. 2 cysteine pairs are disulfide-bonded: Cys72–Cys177 and Cys142–Cys196. A lipid anchor (GPI-anchor amidated asparagine) is attached at Asn215. The propeptide at 216 to 244 (AGLEAVTVPSFLTAVVPTFLGIAYGLLMA) is removed in mature form.

Belongs to the X325 family. Cu(2+) serves as cofactor. In terms of processing, the catalytically essential N-terminal histidine His-24 is post-translationally modified by methylation to prevent protonation of the histidine side chain, and protect the critical active site of the enzyme from oxidative damage.

It is found in the cell membrane. Functionally, lytic polysaccharide monooxygenase-like protein that has diverged to biological functions other than polysaccharide degradation since it does not perform oxidative cleavage of polysaccharides. Acts as a cell surface-bound protein that functions in the copper-accumulation pathway. May also act as the major cell wall sensor that regulates MAP kinase-dependent hyphal anastomosis, the fusion of hyphal cells. This Emericella nidulans (strain FGSC A4 / ATCC 38163 / CBS 112.46 / NRRL 194 / M139) (Aspergillus nidulans) protein is Lytic polysaccharide monooxygenase-like protein ANIA_04702.